A 776-amino-acid polypeptide reads, in one-letter code: Structure-specific endonuclease subunit SLX4 (776 aa).

The span at 201–217 (EEQMVSDDNSSTEDDTD) shows a compositional bias: acidic residues. Disordered stretches follow at residues 201-223 (EEQMVSDDNSSTEDDTDPTQNDG), 263-283 (KSLQRHSQKDSDNGNTIPDQN), and 507-531 (PPLDACSDSGPTGVVSSMPYKKPHS).

It belongs to the SLX4 family. Forms a heterodimer with SLX1. Phosphorylated in response to DNA damage.

The protein resides in the nucleus. Regulatory subunit of the SLX1-SLX4 structure-specific endonuclease that resolves DNA secondary structures generated during DNA repair and recombination. Has endonuclease activity towards branched DNA substrates, introducing single-strand cuts in duplex DNA close to junctions with ss-DNA. The sequence is that of Structure-specific endonuclease subunit SLX4 from Candida albicans (strain SC5314 / ATCC MYA-2876) (Yeast).